The sequence spans 942 residues: DNA mismatch repair protein MSH2 (942 aa).

Residue 667 to 674 (GPNMGGKS) coordinates ATP.

It belongs to the DNA mismatch repair MutS family. In terms of assembly, heterodimer of MSH2 and MSH6 (GTBP).

It is found in the nucleus. Functionally, involved in postreplication mismatch repair. Binds specifically to DNA containing mismatched nucleotides thus providing a target for the excision repair processes characteristic of postreplication mismatch repair. The polypeptide is DNA mismatch repair protein MSH2 (MUS1) (Zea mays (Maize)).